The sequence spans 735 residues: Muskelin (735 aa).

A2 carries the post-translational modification N-acetylalanine. Positions 172-204 constitute a LisH domain; it reads REQEAIRLCLKHFRQHNYTEAFESLQKKTKIAL. One can recognise a CTLH domain in the interval 206–258; sequence HPMLTDMHDKLVLKGDFDACEELIEKAVNDGLFNQYISQQEYKPRWSQIIPKS. Kelch repeat units lie at residues 284–330, 339–391, 400–458, 469–515, 526–578, and 597–651; these read TVYL…SCHK, QIYT…FDHQ, MIYT…SRIG, CLYV…TGFT, EIHV…SLQE, and VHYL…AQMD.

Homodimer; may form higher oligomers. Identified in the CTLH complex that contains GID4, RANBP9 and/or RANBP10, MKLN1, MAEA, RMND5A (or alternatively its paralog RMND5B), GID8, ARMC8, WDR26 and YPEL5. Within this complex, MAEA, RMND5A (or alternatively its paralog RMND5B), GID8, WDR26, and RANBP9 and/or RANBP10 form the catalytic core, while GID4, MKLN1, ARMC8 and YPEL5 have ancillary roles. Interacts with RANBP9. Part of a complex consisting of RANBP9, MKLN1 and GID8. Interacts with GABRA1. Interacts with the C-terminal tail of PTGER3.

It localises to the cytoplasm. It is found in the cell projection. The protein resides in the ruffle. Its subcellular location is the cell cortex. The protein localises to the synapse. It localises to the postsynapse. In terms of biological role, component of the CTLH E3 ubiquitin-protein ligase complex that selectively accepts ubiquitin from UBE2H and mediates ubiquitination and subsequent proteasomal degradation of the transcription factor HBP1. Required for internalization of the GABA receptor GABRA1 from the cell membrane via endosomes and subsequent GABRA1 degradation. Acts as a mediator of cell spreading and cytoskeletal responses to the extracellular matrix component THBS1. The polypeptide is Muskelin (Mkln1) (Rattus norvegicus (Rat)).